A 420-amino-acid chain; its full sequence is Pre-mRNA-splicing factor RBM22 (420 aa).

The C3H1-type zinc finger occupies 159–186 (RNRPHICSFWVKGECKRGEECPYRHEKP). One can recognise an RRM domain in the interval 232 to 305 (TTLYVGGLGD…RRLNVKWGRS (74 aa)). 2 disordered regions span residues 303–343 (GRSQ…AAEE) and 372–420 (APPP…HSSP). The segment covering 309–318 (RGKEKDKEGT) has biased composition (basic and acidic residues).

This sequence belongs to the SLT11 family. As to quaternary structure, component of the pre-catalytic and catalytic spliceosome complexes. Component of the postcatalytic spliceosome P complex.

It is found in the nucleus. It localises to the cytoplasm. Required for pre-mRNA splicing as component of the activated spliceosome. Involved in the first step of pre-mRNA splicing. Binds directly to the internal stem-loop (ISL) domain of the U6 snRNA and to the pre-mRNA intron near the 5' splice site during the activation and catalytic phases of the spliceosome cycle. In Gallus gallus (Chicken), this protein is Pre-mRNA-splicing factor RBM22 (RBM22).